The sequence spans 1256 residues: Splicing factor, arginine/serine-rich 19 (1256 aa).

Disordered stretches follow at residues 1–33 (MEEE…SPSA), 158–343 (GKTV…APRR), 371–395 (ALSL…PEEE), 408–1030 (PRQP…TLPP), 1112–1152 (GSLP…DKYL), and 1221–1256 (FRKH…LPPL). Basic and acidic residues predominate over residues 7–27 (SRGKTEESGEDRGDGPPDRDP). The segment covering 192-206 (SSASSSPSPSPSSSS) has biased composition (low complexity). Positions 207-222 (PSPPPPPPPPPPPALP) are enriched in pro residues. A compositionally biased stretch (basic and acidic residues) spans 227 to 236 (DIYDPFHPTD). The residue at position 240 (Ser240) is a Phosphoserine. The span at 255-265 (TGSNPSSSAGT) shows a compositional bias: polar residues. Positions 268–282 (PEEEEEEEEEEEEEG) are enriched in acidic residues. A Phosphothreonine modification is found at Thr328. Over residues 382–393 (PEIEEGEIVQPE) the composition is skewed to acidic residues. Residues 412–424 (PASVATLASVAAP) are compositionally biased toward low complexity. 2 positions are modified to phosphoserine: Ser442 and Ser447. Positions 478 to 489 (KILTQRRERYRQ) are enriched in basic residues. Phosphoserine occurs at positions 491, 493, 510, 518, and 520. Composition is skewed to basic residues over residues 538–553 (TARR…RSRS) and 560–577 (RGGH…RRRS). A phosphoserine mark is found at Ser577 and Ser579. Residues 592–611 (RERHRGKRREGGKKKKKRSR) show a composition bias toward basic residues. Basic and acidic residues predominate over residues 612-623 (SRAEKRSGDLEK). Thr663 carries the post-translational modification Phosphothreonine. Phosphoserine is present on residues Ser676 and Ser682. Phosphotyrosine is present on Tyr689. 2 positions are modified to phosphoserine: Ser691 and Ser695. Basic and acidic residues-rich tracts occupy residues 696-709 (ADER…DRRR) and 719-741 (SREK…DRSS). Low complexity-rich tracts occupy residues 752–775 (PGSG…SCSS) and 793–804 (SSTTPAKDSSSS). Residue Lys812 forms a Glycyl lysine isopeptide (Lys-Gly) (interchain with G-Cter in SUMO2) linkage. Over residues 813–831 (FSRDRESRSPFLKPDERAP) the composition is skewed to basic and acidic residues. 2 positions are modified to phosphoserine: Ser819 and Ser821. A compositionally biased stretch (basic residues) spans 843–875 (KPKKTKAKAKAGAKKAKGTKGKTKPSKTRKKVR). Residues Ser876, Ser883, Ser910, and Ser912 each carry the phosphoserine modification. Residues 922–935 (STPPPKVAPPPPAL) are compositionally biased toward pro residues. 2 positions are modified to phosphothreonine: Thr923 and Thr936. The span at 938-947 (DSQTVDSSCK) shows a compositional bias: polar residues. Ser939 is subject to Phosphoserine. Residue Thr948 is modified to Phosphothreonine. Acidic residues predominate over residues 969–984 (EEEEEEEEEEEEEEEQ). The segment covering 985–1017 (QPATTTATSTAAAAPSTAPSAGSTAGDSGAEDG) has biased composition (low complexity). The tract at residues 1131-1256 (PASDKREGSS…GGPGLPLPPL (126 aa)) is necessary for interaction with the CTD domain of POLR2A. Residues 1133 to 1152 (SDKREGSSSSEGRGDTDKYL) show a composition bias toward basic and acidic residues. Residues 1244–1256 (PDKGGPGLPLPPL) show a composition bias toward pro residues.

The protein belongs to the splicing factor SR family. Interacts with POLR2A.

The protein localises to the nucleus. Functionally, may function in pre-mRNA splicing. The chain is Splicing factor, arginine/serine-rich 19 (Scaf1) from Mus musculus (Mouse).